We begin with the raw amino-acid sequence, 612 residues long: RNA polymerase sigma factor RpoD (612 aa).

Positions 191-206 (QQNNEEDEENNQEDHE) are enriched in acidic residues. The segment at 191–210 (QQNNEEDEENNQEDHEDDHS) is disordered. The segment at 378 to 448 (MVEANLRLVI…TRSIADQART (71 aa)) is sigma-70 factor domain-2. Positions 402-405 (DLIQ) match the Interaction with polymerase core subunit RpoC motif. Residues 457-533 (ETINKLNRIS…DTTLELPLDS (77 aa)) are sigma-70 factor domain-3. Residues 546–599 (VLSGLTAREAKVLRMRFGIDMNTDHTLEEVGKQFDVTRERIRQIEAKALRKLRH) form a sigma-70 factor domain-4 region. Positions 572 to 591 (LEEVGKQFDVTRERIRQIEA) form a DNA-binding region, H-T-H motif.

This sequence belongs to the sigma-70 factor family. RpoD/SigA subfamily. In terms of assembly, interacts transiently with the RNA polymerase catalytic core.

The protein resides in the cytoplasm. Its function is as follows. Sigma factors are initiation factors that promote the attachment of RNA polymerase to specific initiation sites and are then released. This sigma factor is the primary sigma factor during exponential growth. The protein is RNA polymerase sigma factor RpoD of Buchnera aphidicola subsp. Acyrthosiphon pisum (strain APS) (Acyrthosiphon pisum symbiotic bacterium).